A 925-amino-acid polypeptide reads, in one-letter code: Protein translocase subunit SecA (925 aa).

ATP-binding positions include Gln87, 105–109, and Asp515; that span reads GEGKT. Residues Cys909, Cys911, Cys920, and His921 each contribute to the Zn(2+) site.

This sequence belongs to the SecA family. As to quaternary structure, monomer and homodimer. Part of the essential Sec protein translocation apparatus which comprises SecA, SecYEG and auxiliary proteins SecDF-YajC and YidC. The cofactor is Zn(2+).

The protein resides in the cell inner membrane. Its subcellular location is the cytoplasm. The enzyme catalyses ATP + H2O + cellular proteinSide 1 = ADP + phosphate + cellular proteinSide 2.. Its function is as follows. Part of the Sec protein translocase complex. Interacts with the SecYEG preprotein conducting channel. Has a central role in coupling the hydrolysis of ATP to the transfer of proteins into and across the cell membrane, serving both as a receptor for the preprotein-SecB complex and as an ATP-driven molecular motor driving the stepwise translocation of polypeptide chains across the membrane. This Cupriavidus taiwanensis (strain DSM 17343 / BCRC 17206 / CCUG 44338 / CIP 107171 / LMG 19424 / R1) (Ralstonia taiwanensis (strain LMG 19424)) protein is Protein translocase subunit SecA.